A 40-amino-acid polypeptide reads, in one-letter code: Photosystem I reaction center subunit IX (40 aa).

A helical transmembrane segment spans residues 12 to 34; the sequence is APVLLTAWMSLTAGMIIEIQRFF.

It belongs to the PsaJ family.

It is found in the plastid. The protein localises to the chloroplast thylakoid membrane. Its function is as follows. May help in the organization of the PsaE and PsaF subunits. This chain is Photosystem I reaction center subunit IX, found in Emiliania huxleyi (Coccolithophore).